The primary structure comprises 284 residues: RNase adapter protein RapZ (284 aa).

8–15 (GRSGSGKS) is an ATP binding site. 56–59 (DVRN) contributes to the GTP binding site. An RNA-binding region spans residues 266–284 (RSRGKNVQSRHRTLEKRKS).

Belongs to the RapZ-like family. RapZ subfamily. Homotrimer.

Functionally, modulates the synthesis of GlmS, by affecting the processing and stability of the regulatory small RNA GlmZ. When glucosamine-6-phosphate (GlcN6P) concentrations are high in the cell, RapZ binds GlmZ and targets it to cleavage by RNase E. Consequently, GlmZ is inactivated and unable to activate GlmS synthesis. Under low GlcN6P concentrations, RapZ is sequestered and inactivated by an other regulatory small RNA, GlmY, preventing GlmZ degradation and leading to synthesis of GlmS. This is RNase adapter protein RapZ from Cronobacter sakazakii (strain ATCC BAA-894) (Enterobacter sakazakii).